The following is a 240-amino-acid chain: Phosphoribosylaminoimidazole-succinocarboxamide synthase (240 aa).

The protein belongs to the SAICAR synthetase family.

It carries out the reaction 5-amino-1-(5-phospho-D-ribosyl)imidazole-4-carboxylate + L-aspartate + ATP = (2S)-2-[5-amino-1-(5-phospho-beta-D-ribosyl)imidazole-4-carboxamido]succinate + ADP + phosphate + 2 H(+). It functions in the pathway purine metabolism; IMP biosynthesis via de novo pathway; 5-amino-1-(5-phospho-D-ribosyl)imidazole-4-carboxamide from 5-amino-1-(5-phospho-D-ribosyl)imidazole-4-carboxylate: step 1/2. This Wolbachia pipientis wMel protein is Phosphoribosylaminoimidazole-succinocarboxamide synthase.